Consider the following 488-residue polypeptide: Dipeptide and tripeptide permease B (488 aa).

Topologically, residues 1 to 27 (MSKTASVGLWDQPKPFFMIFFVELWER) are cytoplasmic. Residues 28–48 (FGFYGVQGILAIYFVQQLGFS) form a helical membrane-spanning segment. At 49–52 (EEQS) the chain is on the periplasmic side. Residues 53–73 (FITFGAFTALVYGLISVGGYV) form a helical membrane-spanning segment. At 74–82 (GDHILGTKR) the chain is on the cytoplasmic side. The chain crosses the membrane as a helical span at residues 83–103 (TIVLGAIVMAIGYYMIGLSIM). Residues 104 to 106 (KPE) lie on the Periplasmic side of the membrane. A helical transmembrane segment spans residues 107–127 (LIFYALGTVAVGNGLFKANPA). Topologically, residues 128 to 146 (SLLAKCYQPQDPRLDGAFT) are cytoplasmic. The chain crosses the membrane as a helical span at residues 147 to 167 (LFYMSINLGSLFSLSLAPVIA). Over 168-172 (EKYGY) the chain is Periplasmic. The helical transmembrane segment at 173–193 (TVTYNICGIGLIIALLVYIAC) threads the bilayer. The Cytoplasmic segment spans residues 194–211 (RRMVHNIGSAPDHHPVKP). Residues 212-232 (IGLIAVLIGSVVMVGVCAWLL) traverse the membrane as a helical segment. Topologically, residues 233–234 (HN) are periplasmic. A helical membrane pass occupies residues 235–255 (IKVANIALFAITTIVVLIFFW). Residues 256 to 267 (QAFKQNRVGRNK) lie on the Cytoplasmic side of the membrane. A helical transmembrane segment spans residues 268–288 (MFVAFILMLQAVVFFILYNQM). The Periplasmic segment spans residues 289–311 (PMSLNFFAINNVHHQILGFDVNP). A helical transmembrane segment spans residues 312-332 (VSFQAFNPFWIIIVSPILAVV). Topologically, residues 333-348 (YTKLGAKGKDFSMPAK) are cytoplasmic. Residues 349-369 (FTFGMFLCSLGFLTAAASGLF) form a helical membrane-spanning segment. Topologically, residues 370–378 (ADAQGITSP) are periplasmic. Residues 379-399 (WFIVLVYLFQSVGELMISALG) form a helical membrane-spanning segment. At 400–423 (LAMVAAFVPSYLTGFILGMWFLSQ) the chain is on the cytoplasmic side. A helical transmembrane segment spans residues 424–444 (AVASMLASHVAALTATPVGVT). Over 445–455 (DPLQTLPIYMS) the chain is Periplasmic. A helical membrane pass occupies residues 456 to 476 (VFGKIGVATLIVAIIMTFMVP). Residues 477–488 (WLNRIMREEVKA) lie on the Cytoplasmic side of the membrane.

The protein belongs to the major facilitator superfamily. Proton-dependent oligopeptide transporter (POT/PTR) (TC 2.A.17) family. DtpB subfamily.

It is found in the cell inner membrane. In terms of biological role, proton-dependent permease that transports di- and tripeptides. In Xenorhabdus bovienii (strain SS-2004) (Xenorhabdus nematophila subsp. bovienii), this protein is Dipeptide and tripeptide permease B.